Reading from the N-terminus, the 297-residue chain is Heme A synthase (297 aa).

The Cytoplasmic portion of the chain corresponds to 1–6; the sequence is MNRKLS. The helical transmembrane segment at 7–27 threads the bilayer; sequence IFSAFVTFTMMIVLLMGGTVT. At 28–62 the chain is on the extracellular side; the sequence is KTDSGNGCGTDWPLCHGELIPTNPSVETMIEYSHR. Cys35 and Cys42 form a disulfide bridge. Glu58 is a catalytic residue. His61 is a binding site for heme o. The helical transmembrane segment at 63–83 threads the bilayer; it reads AVTGVVGLLIIALCLWTLVAF. Residues 84–90 lie on the Cytoplasmic side of the membrane; that stretch reads KDRLDIK. The helical transmembrane segment at 91–111 threads the bilayer; it reads IFAFLAFIFMLIQSIVGAGAV. Over 112-121 the chain is Extracellular; it reads VWQQSDLVMA. The helical transmembrane segment at 122-142 threads the bilayer; that stretch reads LHFGISLISFASLLILTILIM. His123 serves as a coordination point for heme o. Over 143–160 the chain is Cytoplasmic; the sequence is ERSGQEFRESVPAFLRKL. Residues 161–181 traverse the membrane as a helical segment; sequence LYGLLIYTLIVVYTGAFVRHV. Topologically, residues 182–201 are extracellular; that stretch reads GATYACVGWPVCSQPTMTFE. Cys187 and Cys193 are oxidised to a cystine. The chain crosses the membrane as a helical span at residues 202–222; sequence AWVQMIHRILAGLLFFYTLFV. Residue His208 coordinates heme b. At 223–236 the chain is on the cytoplasmic side; that stretch reads HYTAIRLKHRTSRT. Residues 237–257 form a helical membrane-spanning segment; the sequence is GMLFATFFISCQVATGAWIVL. Over 258-262 the chain is Extracellular; sequence GGHAT. The chain crosses the membrane as a helical span at residues 263-283; it reads YVPLLHAFLITCYFGVISYLA. A heme b-binding site is contributed by His268. Residues 284–297 lie on the Cytoplasmic side of the membrane; that stretch reads YHAFRTRKKDSRLR.

It belongs to the COX15/CtaA family. Type 1 subfamily. In terms of assembly, interacts with CtaB. The cofactor is heme b.

Its subcellular location is the cell membrane. It catalyses the reaction Fe(II)-heme o + 2 A + H2O = Fe(II)-heme a + 2 AH2. It functions in the pathway porphyrin-containing compound metabolism; heme A biosynthesis; heme A from heme O: step 1/1. Catalyzes the conversion of heme O to heme A by two successive hydroxylations of the methyl group at C8. The first hydroxylation forms heme I, the second hydroxylation results in an unstable dihydroxymethyl group, which spontaneously dehydrates, resulting in the formyl group of heme A. The polypeptide is Heme A synthase (Exiguobacterium sibiricum (strain DSM 17290 / CCUG 55495 / CIP 109462 / JCM 13490 / 255-15)).